The sequence spans 317 residues: Carbamate kinase (317 aa).

This sequence belongs to the carbamate kinase family. As to quaternary structure, homodimer.

It catalyses the reaction hydrogencarbonate + NH4(+) + ATP = carbamoyl phosphate + ADP + H2O + H(+). It functions in the pathway metabolic intermediate metabolism; carbamoyl phosphate degradation; CO(2) and NH(3) from carbamoyl phosphate: step 1/1. This chain is Carbamate kinase (CBK), found in Giardia intestinalis (Giardia lamblia).